A 335-amino-acid polypeptide reads, in one-letter code: Holliday junction branch migration complex subunit RuvB (335 aa).

The segment at 4–184 (ADRIISSNAQ…FGIVQRLEFY (181 aa)) is large ATPase domain (RuvB-L). Residues Ile23, Arg24, Gly65, Lys68, Thr69, Thr70, 131–133 (EDY), Arg174, Tyr184, and Arg221 contribute to the ATP site. Thr69 is a Mg(2+) binding site. Residues 185-255 (SVEDLTSIVA…IAKSALSMLD (71 aa)) are small ATPAse domain (RuvB-S). Residues 258-335 (QAGFDYLDRK…RHFGLDKLTE (78 aa)) form a head domain (RuvB-H) region. DNA contacts are provided by Arg294, Arg313, and Arg318.

The protein belongs to the RuvB family. In terms of assembly, homohexamer. Forms an RuvA(8)-RuvB(12)-Holliday junction (HJ) complex. HJ DNA is sandwiched between 2 RuvA tetramers; dsDNA enters through RuvA and exits via RuvB. An RuvB hexamer assembles on each DNA strand where it exits the tetramer. Each RuvB hexamer is contacted by two RuvA subunits (via domain III) on 2 adjacent RuvB subunits; this complex drives branch migration. In the full resolvosome a probable DNA-RuvA(4)-RuvB(12)-RuvC(2) complex forms which resolves the HJ.

It is found in the cytoplasm. The enzyme catalyses ATP + H2O = ADP + phosphate + H(+). Functionally, the RuvA-RuvB-RuvC complex processes Holliday junction (HJ) DNA during genetic recombination and DNA repair, while the RuvA-RuvB complex plays an important role in the rescue of blocked DNA replication forks via replication fork reversal (RFR). RuvA specifically binds to HJ cruciform DNA, conferring on it an open structure. The RuvB hexamer acts as an ATP-dependent pump, pulling dsDNA into and through the RuvAB complex. RuvB forms 2 homohexamers on either side of HJ DNA bound by 1 or 2 RuvA tetramers; 4 subunits per hexamer contact DNA at a time. Coordinated motions by a converter formed by DNA-disengaged RuvB subunits stimulates ATP hydrolysis and nucleotide exchange. Immobilization of the converter enables RuvB to convert the ATP-contained energy into a lever motion, pulling 2 nucleotides of DNA out of the RuvA tetramer per ATP hydrolyzed, thus driving DNA branch migration. The RuvB motors rotate together with the DNA substrate, which together with the progressing nucleotide cycle form the mechanistic basis for DNA recombination by continuous HJ branch migration. Branch migration allows RuvC to scan DNA until it finds its consensus sequence, where it cleaves and resolves cruciform DNA. This is Holliday junction branch migration complex subunit RuvB from Mannheimia succiniciproducens (strain KCTC 0769BP / MBEL55E).